The following is a 228-amino-acid chain: Biopolymer transport protein exbB1 (228 aa).

3 consecutive transmembrane segments (helical) span residues 11–31, 116–136, and 158–178; these read LGLM…LLAE, LTLI…LGLI, and LGVA…AVAG.

Belongs to the ExbB/TolQ family. In terms of assembly, the accessory proteins ExbB and ExbD seem to form a complex with TonB.

The protein localises to the cell inner membrane. Its function is as follows. Involved in the TonB-dependent energy-dependent transport of various receptor-bound substrates. Protects ExbD from proteolytic degradation and functionally stabilizes TonB. The chain is Biopolymer transport protein exbB1 (exbB1) from Vibrio cholerae serotype O1 (strain ATCC 39315 / El Tor Inaba N16961).